Here is a 171-residue protein sequence, read N- to C-terminus: MNKANSFNKEELIACGHGKLFGPNSPRLPVDNMLMIDRIITINDNGGEFGKGEIVAELDIKPELWFFDCHFITDPVMPGCLGLDAMWQLVGFYLGWEGAEGKGRALGVGEVKFTGQVLPGAKKVTYKLNIKRTIHRKLVMGIADAILEVDGRQIYSATDLKVGVFSDTSTF.

His-70 is a catalytic residue.

This sequence belongs to the thioester dehydratase family. FabA subfamily. In terms of assembly, homodimer.

It localises to the cytoplasm. The catalysed reaction is a (3R)-hydroxyacyl-[ACP] = a (2E)-enoyl-[ACP] + H2O. The enzyme catalyses (3R)-hydroxydecanoyl-[ACP] = (2E)-decenoyl-[ACP] + H2O. It catalyses the reaction (2E)-decenoyl-[ACP] = (3Z)-decenoyl-[ACP]. It functions in the pathway lipid metabolism; fatty acid biosynthesis. Necessary for the introduction of cis unsaturation into fatty acids. Catalyzes the dehydration of (3R)-3-hydroxydecanoyl-ACP to E-(2)-decenoyl-ACP and then its isomerization to Z-(3)-decenoyl-ACP. Can catalyze the dehydratase reaction for beta-hydroxyacyl-ACPs with saturated chain lengths up to 16:0, being most active on intermediate chain length. The chain is 3-hydroxydecanoyl-[acyl-carrier-protein] dehydratase from Shewanella oneidensis (strain ATCC 700550 / JCM 31522 / CIP 106686 / LMG 19005 / NCIMB 14063 / MR-1).